Here is a 683-residue protein sequence, read N- to C-terminus: Probable potassium transport system protein Kup 1 (683 aa).

Transmembrane regions (helical) follow at residues 13 to 33 (GLLI…LYVM), 55 to 75 (ISLV…FIAL), 98 to 118 (WLVL…TLTP), 139 to 159 (VPVS…LLLF), 168 to 188 (IIGK…GVIG), 218 to 238 (AGIF…ALYS), 251 to 271 (SWPY…VWIL), 296 to 316 (LAAI…LITG), 345 to 365 (IYIP…VLFF), 376 to 396 (GLSI…WLAM), 401 to 421 (TIWN…FMLA), and 426 to 446 (FMHG…IMYV).

It belongs to the HAK/KUP transporter (TC 2.A.72) family.

Its subcellular location is the cell membrane. It catalyses the reaction K(+)(in) + H(+)(in) = K(+)(out) + H(+)(out). Its function is as follows. Transport of potassium into the cell. Likely operates as a K(+):H(+) symporter. The sequence is that of Probable potassium transport system protein Kup 1 from Lactobacillus johnsonii (strain CNCM I-12250 / La1 / NCC 533).